Here is a 312-residue protein sequence, read N- to C-terminus: Beta-ketoacyl-[acyl-carrier-protein] synthase III (312 aa).

Residues Cys-112 and His-237 contribute to the active site. The ACP-binding stretch occupies residues Gln-238–Arg-242. Residue Asn-267 is part of the active site.

The protein belongs to the thiolase-like superfamily. FabH family. Homodimer.

It localises to the cytoplasm. The catalysed reaction is malonyl-[ACP] + acetyl-CoA + H(+) = 3-oxobutanoyl-[ACP] + CO2 + CoA. Its pathway is lipid metabolism; fatty acid biosynthesis. In terms of biological role, catalyzes the condensation reaction of fatty acid synthesis by the addition to an acyl acceptor of two carbons from malonyl-ACP. Catalyzes the first condensation reaction which initiates fatty acid synthesis and may therefore play a role in governing the total rate of fatty acid production. Possesses both acetoacetyl-ACP synthase and acetyl transacylase activities. Its substrate specificity determines the biosynthesis of branched-chain and/or straight-chain of fatty acids. The polypeptide is Beta-ketoacyl-[acyl-carrier-protein] synthase III (Listeria innocua serovar 6a (strain ATCC BAA-680 / CLIP 11262)).